The chain runs to 311 residues: Porphobilinogen deaminase (311 aa).

At C243 the chain carries S-(dipyrrolylmethanemethyl)cysteine.

It belongs to the HMBS family. Monomer. It depends on dipyrromethane as a cofactor.

It carries out the reaction 4 porphobilinogen + H2O = hydroxymethylbilane + 4 NH4(+). It functions in the pathway porphyrin-containing compound metabolism; protoporphyrin-IX biosynthesis; coproporphyrinogen-III from 5-aminolevulinate: step 2/4. Functionally, tetrapolymerization of the monopyrrole PBG into the hydroxymethylbilane pre-uroporphyrinogen in several discrete steps. In Aliivibrio salmonicida (strain LFI1238) (Vibrio salmonicida (strain LFI1238)), this protein is Porphobilinogen deaminase.